We begin with the raw amino-acid sequence, 182 residues long: ATP synthase subunit b, chloroplastic (182 aa).

The chain crosses the membrane as a helical span at residues 31–53 (IINISVVLGVLVYFGKGVLSNLL).

Belongs to the ATPase B chain family. As to quaternary structure, F-type ATPases have 2 components, F(1) - the catalytic core - and F(0) - the membrane proton channel. F(1) has five subunits: alpha(3), beta(3), gamma(1), delta(1), epsilon(1). F(0) has four main subunits: a(1), b(1), b'(1) and c(10-14). The alpha and beta chains form an alternating ring which encloses part of the gamma chain. F(1) is attached to F(0) by a central stalk formed by the gamma and epsilon chains, while a peripheral stalk is formed by the delta, b and b' chains.

Its subcellular location is the plastid. The protein resides in the chloroplast thylakoid membrane. F(1)F(0) ATP synthase produces ATP from ADP in the presence of a proton or sodium gradient. F-type ATPases consist of two structural domains, F(1) containing the extramembraneous catalytic core and F(0) containing the membrane proton channel, linked together by a central stalk and a peripheral stalk. During catalysis, ATP synthesis in the catalytic domain of F(1) is coupled via a rotary mechanism of the central stalk subunits to proton translocation. Its function is as follows. Component of the F(0) channel, it forms part of the peripheral stalk, linking F(1) to F(0). This chain is ATP synthase subunit b, chloroplastic, found in Welwitschia mirabilis (Tree tumbo).